The following is an 835-amino-acid chain: Protein VP3 (835 aa).

Positions 171–245 are N7-methyltransferase activity; that stretch reads KKIKERMTTS…KDTIKLKQER (75 aa). The segment at 246–428 is 2'-O-methyltransferase activity; that stretch reads WLGKRLSQFD…KNTKRFIPKG (183 aa). The N7-methyltransferase activity stretch occupies residues 429–555; that stretch reads VLYSYINNTI…NHLFILSGTN (127 aa). The segment at 556 to 692 is GTase/RTPase activity; that stretch reads KYFKLDQFAN…NYINKVYSIT (137 aa). A 2'-5'-phosphodiesterase activity region spans residues 693–835; that stretch reads YADDPNYFIG…KGDTVFDMTE (143 aa). Catalysis depends on for 2'-5'-phosphodiesterase activity residues His-718, Thr-720, His-797, and Thr-799.

The protein belongs to the rotavirus VP3 family. In terms of assembly, interacts with VP1. Interacts with VP2.

It localises to the virion. It carries out the reaction a 5'-end diphospho-ribonucleoside in mRNA + GTP + H(+) = a 5'-end (5'-triphosphoguanosine)-ribonucleoside in mRNA + diphosphate. The catalysed reaction is a 5'-end (5'-triphosphoguanosine)-ribonucleoside in mRNA + S-adenosyl-L-methionine = a 5'-end (N(7)-methyl 5'-triphosphoguanosine)-ribonucleoside in mRNA + S-adenosyl-L-homocysteine. It catalyses the reaction 5'-triphosphoadenylyl-(2'-&gt;5')-adenylyl-(2'-&gt;5')-adenosine + 2 H2O = 2 AMP + ATP + 2 H(+). Multifunctional enzyme involved in mRNA capping. Catalyzes the formation of the 5' cap structure on the viral plus-strand transcripts. Specifically binds to GTP and displays guanylyltransferase and methyltransferase activities. Has affinity for ssRNA but not for dsRNA. Capping activity is non-specific and caps RNAs that initiate with either a G or an A residue. Together with VP1 polymerase, forms a VP1-VP3 complex positioned near the channels situated at each of the five-fold vertices of the core. Following infection, the outermost layer of the virus is lost, leaving a double-layered particle (DLP) made up of the core and VP6 shell. VP1 then catalyzes the transcription of fully conservative plus-strand genomic RNAs that are capped by VP3 and extruded through the DLP's channels into the cytoplasm where they function as mRNAs for translation of viral proteins. DLPs probably have an RNA triphosphatase activity as well, whereas open cores do not. Its function is as follows. Counteracts the host innate immune response thanks to its phosphodiesterase that degrades the 5'-triphosphorylated, 2'-5' linked adenylate oligomers produced by the host cell IFN-inducible 2',5'-oligoadenylate synthetase (OAS). The host RNaseL is therefore not activated. This chain is Protein VP3, found in Rotavirus A (strain RVA/Cow/France/RF/1975/G6P6[1]) (RV-A).